A 339-amino-acid polypeptide reads, in one-letter code: Phosphoribosylformylglycinamidine cyclo-ligase (339 aa).

This sequence belongs to the AIR synthase family.

The protein localises to the cytoplasm. The enzyme catalyses 2-formamido-N(1)-(5-O-phospho-beta-D-ribosyl)acetamidine + ATP = 5-amino-1-(5-phospho-beta-D-ribosyl)imidazole + ADP + phosphate + H(+). It participates in purine metabolism; IMP biosynthesis via de novo pathway; 5-amino-1-(5-phospho-D-ribosyl)imidazole from N(2)-formyl-N(1)-(5-phospho-D-ribosyl)glycinamide: step 2/2. The polypeptide is Phosphoribosylformylglycinamidine cyclo-ligase (Oceanobacillus iheyensis (strain DSM 14371 / CIP 107618 / JCM 11309 / KCTC 3954 / HTE831)).